Here is a 708-residue protein sequence, read N- to C-terminus: UvrABC system protein B (708 aa).

Residues E32 to R419 enclose the Helicase ATP-binding domain. An ATP-binding site is contributed by G45–T52. The short motif at Y98–I121 is the Beta-hairpin element. The region spanning Q436–I598 is the Helicase C-terminal domain. In terms of domain architecture, UVR spans I627 to H662. The interval S668 to G708 is disordered. Basic residues predominate over residues G683 to G708.

It belongs to the UvrB family. In terms of assembly, forms a heterotetramer with UvrA during the search for lesions. Interacts with UvrC in an incision complex.

It localises to the cytoplasm. In terms of biological role, the UvrABC repair system catalyzes the recognition and processing of DNA lesions. A damage recognition complex composed of 2 UvrA and 2 UvrB subunits scans DNA for abnormalities. Upon binding of the UvrA(2)B(2) complex to a putative damaged site, the DNA wraps around one UvrB monomer. DNA wrap is dependent on ATP binding by UvrB and probably causes local melting of the DNA helix, facilitating insertion of UvrB beta-hairpin between the DNA strands. Then UvrB probes one DNA strand for the presence of a lesion. If a lesion is found the UvrA subunits dissociate and the UvrB-DNA preincision complex is formed. This complex is subsequently bound by UvrC and the second UvrB is released. If no lesion is found, the DNA wraps around the other UvrB subunit that will check the other stand for damage. This is UvrABC system protein B from Rhodopirellula baltica (strain DSM 10527 / NCIMB 13988 / SH1).